We begin with the raw amino-acid sequence, 182 residues long: Small ribosomal subunit protein uS5 (182 aa).

Residues 16–79 (FVDRLVHINR…EAAKRGMIYV (64 aa)) form the S5 DRBM domain.

It belongs to the universal ribosomal protein uS5 family. In terms of assembly, part of the 30S ribosomal subunit. Contacts proteins S4 and S8.

With S4 and S12 plays an important role in translational accuracy. Functionally, located at the back of the 30S subunit body where it stabilizes the conformation of the head with respect to the body. In Bartonella quintana (strain Toulouse) (Rochalimaea quintana), this protein is Small ribosomal subunit protein uS5.